The following is a 197-amino-acid chain: Cell division protein SepF (197 aa).

Residues 15–91 form a disordered region; that stretch reads DEEEVESPEE…PPSKSNGKNV (77 aa). Residues 22 to 31 are compositionally biased toward basic and acidic residues; it reads PEERQRRVVQ. Residues 37 to 47 are compositionally biased toward low complexity; it reads TNNVQQNQPQQ. Composition is skewed to polar residues over residues 48-58 and 78-91; these read SERSYSNQSKL and RMNQ…GKNV.

This sequence belongs to the SepF family. In terms of assembly, homodimer. Interacts with FtsZ.

The protein resides in the cytoplasm. In terms of biological role, cell division protein that is part of the divisome complex and is recruited early to the Z-ring. Probably stimulates Z-ring formation, perhaps through the cross-linking of FtsZ protofilaments. Its function overlaps with FtsA. This chain is Cell division protein SepF, found in Staphylococcus haemolyticus (strain JCSC1435).